Reading from the N-terminus, the 85-residue chain is Large ribosomal subunit protein bL27 (85 aa).

The interval Met-1–Gly-22 is disordered.

It belongs to the bacterial ribosomal protein bL27 family.

The protein is Large ribosomal subunit protein bL27 of Escherichia coli O6:K15:H31 (strain 536 / UPEC).